Here is a 537-residue protein sequence, read N- to C-terminus: MDDDYMMLDDDYGEEEDENYSEDDNYSEAEVDLQPVTSTKSTSQVIKKESLVAAQKEILVRVMELLSVKENQARTLLIYYQWNVEKLFSVFADQGKDRMFSCAGLTVFVPSLVTSKKTMKCDVCMEDDLPSNVMTRMECGHRFCNDCWIGHFTVKINEGESKRILCMAHECKAICDEDVVRKLVSPELADRYDRFLIESYVEDNNMVKWCPSKPHCGSAIRKIEDGHDVVEVGCSCGLQFCFSCLSESHSPCSCLMWKLWKKKCEDESETVNWITVNTKLCPKCSKPIQKRDGCNLMTCKCGQHFCWLCGQATGRDHTYTSIAGHSCGRYKDEKVRQLERAQRDLDRYTHYHYRYKAHIDSLKLEDKLRKSILEKAVSNSETKDQKVFKEYSWVTDAVNRLFISRRILSQSYPFAFYMFGEELFKDEMSEKEREIKKNLFEDQQQQLEGNVEKLSKILEEPFDEYDHEKVVEMMRHLTNLTAVVDNLCKEMYECIENELLGPIQFGNHNIAPYRSKGIEQATEFCAESSDCGSSGSS.

The disordered stretch occupies residues 1–30 (MDDDYMMLDDDYGEEEDENYSEDDNYSEAE). The TRIAD supradomain stretch occupies residues 117 to 331 (KTMKCDVCME…IAGHSCGRYK (215 aa)). Residues Cys-121, Cys-124, Cys-139, His-141, Cys-144, Cys-147, Cys-166, Cys-171, Cys-210, Cys-216, Cys-234, Cys-236, Cys-241, Cys-244, His-249, Cys-254, Cys-281, and Cys-284 each coordinate Zn(2+). An RING-type 1 zinc finger spans residues 121 to 171 (CDVCMEDDLPSNVMTRMECGHRFCNDCWIGHFTVKINEGESKRILCMAHEC). The segment at 190–254 (DRYDRFLIES…LSESHSPCSC (65 aa)) adopts an IBR-type zinc-finger fold. An RING-type 2; atypical zinc finger spans residues 281-309 (CPKCSKPIQKRDGCNLMTCKCGQHFCWLC). Residue Cys-294 is part of the active site. Residues Cys-299, Cys-301, Cys-306, Cys-309, His-317, and Cys-327 each coordinate Zn(2+).

It belongs to the RBR family. Ariadne subfamily. Requires Zn(2+) as cofactor. In terms of tissue distribution, ubiquitous.

It carries out the reaction [E2 ubiquitin-conjugating enzyme]-S-ubiquitinyl-L-cysteine + [acceptor protein]-L-lysine = [E2 ubiquitin-conjugating enzyme]-L-cysteine + [acceptor protein]-N(6)-ubiquitinyl-L-lysine.. It participates in protein modification; protein ubiquitination. Its function is as follows. Might act as an E3 ubiquitin-protein ligase, or as part of E3 complex, which accepts ubiquitin from specific E2 ubiquitin-conjugating enzymes and then transfers it to substrates. This is Probable E3 ubiquitin-protein ligase ARI3 (ARI3) from Arabidopsis thaliana (Mouse-ear cress).